An 87-amino-acid chain; its full sequence is UPF0248 protein TSIB_1445 (87 aa).

Belongs to the UPF0248 family.

The protein is UPF0248 protein TSIB_1445 of Thermococcus sibiricus (strain DSM 12597 / MM 739).